A 585-amino-acid chain; its full sequence is Protein FAM83D (585 aa).

Residues 1 to 296 form a DUF1669 region; that stretch reads MAARFELLDD…LYAQSEPISS (296 aa). At Ser-295 the chain carries Phosphoserine. 2 disordered regions span residues 334 to 411 and 425 to 482; these read LSST…TSSS and AASS…SQGS. The segment at 337–585 is required for interaction with KIF22 and function in chromosome congression; it reads TPRKSNLGPE…RDIALYPPYQ (249 aa). Composition is skewed to basic and acidic residues over residues 347 to 360 and 369 to 383; these read EPPK…RPDS and DYFH…DSKV. Residues 425–441 are compositionally biased toward polar residues; it reads AASSQATVWSKSTTTQT. Residue Ser-458 is modified to Phosphoserine. A compositionally biased stretch (low complexity) spans 458 to 482; the sequence is SPASKMSVSRSSSVRSSSSVSSQGS. Thr-511 is modified (phosphothreonine).

It belongs to the FAM83 family. Interacts with FBXW7; promotes FBXW7 degradation. May interact with RAF1. Interacts with KIF22; recruits KIF22 to mitotic spindle microtubules. Interacts (via C-terminus) with DYNLL1. Interacts with HMMR. Directly interacts (via DUF1669) with CSNK1A1 and CSNK1A1L. Phosphorylated during mitosis.

Its subcellular location is the cytoplasm. The protein localises to the cytoskeleton. The protein resides in the spindle. It localises to the spindle pole. Its function is as follows. Through the degradation of FBXW7, may act indirectly on the expression and downstream signaling of MTOR, JUN and MYC. May play also a role in cell proliferation through activation of the ERK1/ERK2 signaling cascade. May also be important for proper chromosome congression and alignment during mitosis through its interaction with KIF22. The protein is Protein FAM83D of Mus musculus (Mouse).